Consider the following 142-residue polypeptide: ATP synthase epsilon chain (142 aa).

The protein belongs to the ATPase epsilon chain family. As to quaternary structure, F-type ATPases have 2 components, CF(1) - the catalytic core - and CF(0) - the membrane proton channel. CF(1) has five subunits: alpha(3), beta(3), gamma(1), delta(1), epsilon(1). CF(0) has three main subunits: a, b and c.

It localises to the cell inner membrane. Functionally, produces ATP from ADP in the presence of a proton gradient across the membrane. The polypeptide is ATP synthase epsilon chain (Koribacter versatilis (strain Ellin345)).